The sequence spans 487 residues: RCC1 repeat-containing protein DDB_G0284033 (487 aa).

5 RCC1 repeats span residues 66 to 127, 207 to 259, 260 to 313, 373 to 426, and 428 to 483; these read SNKV…FSGY, RSLI…ALSN, DGKL…ALTS, NGNI…IVET, and DGRF…SLNS.

This chain is RCC1 repeat-containing protein DDB_G0284033, found in Dictyostelium discoideum (Social amoeba).